Reading from the N-terminus, the 536-residue chain is Uridine 5'-monophosphate transferase (536 aa).

The interval 22-84 (ADHPTHTPED…GLQQCSSSPS (63 aa)) is disordered. The segment covering 31–45 (DSPQTVPSPRSSSAH) has biased composition (polar residues). Positions 48 to 60 (EIQELRSLQETRP) are enriched in basic and acidic residues. Over residues 66-84 (RSQSRSSKHGLQQCSSSPS) the composition is skewed to polar residues. LRR repeat units lie at residues 140 to 164 (AGQA…LHRL), 165 to 189 (AHLR…SLCK), 191 to 211 (LERI…IGAL), 212 to 234 (KNLS…IGQC), 236 to 257 (SLTT…LANL), and 258 to 282 (TQLK…NLDD). A Fido domain is found at 377–533 (ITLDRIFKLN…LEGIATVMNQ (157 aa)).

This sequence in the C-terminal section; belongs to the fic family. As to quaternary structure, interacts with several members of the Arabidopsis RLCK VIIa subfamily.

It localises to the secreted. Its subcellular location is the host cell. The protein resides in the host cell membrane. The enzyme catalyses L-seryl-[protein] + UTP = O-(5'-uridylyl)-L-seryl-[protein] + diphosphate. The catalysed reaction is L-threonyl-[protein] + UTP = uridylyl-L-threonyl-[protein] + diphosphate. In terms of biological role, functions both as a virulence and an avirulence gene in Arabidopsis. Causes disease on the Kashmir (Kas) ecotype, but not on Columbia (Col-0) ecotype. Acts by directly uridylylating the conserved phosphorylation sites in the activation loop of a number of host receptor-like cytoplasmic protein kinases (RLCK), including BIK1, RIPK, PBL1 and PBL2, preventing the activation of these kinases and subsequent signal transduction. In susceptible Arabidopsis plants, uridylylation of BIK1 inhibits the PAMP-triggered immunity (PTI) signaling cascade and thereby promotes bacterial virulence. It also inhibits RPM1-dependent effector-triggered immunity (ETI) in mesophyll tissues by targeting RIPK. In contrast, in the resistant ecotype Col-0, xopAC is a major avirulence gene. Uridylylation of PBL2 triggers the PBL2-RKS1 interaction and thus the assembly of the PBL2-RKS1-ZAR1 complex, which, in turn, activates effector-triggered immunity (ETI) against X.campestris. This is Uridine 5'-monophosphate transferase from Xanthomonas campestris pv. campestris (strain 8004).